The sequence spans 253 residues: Rab GTPase-activating protein 1-like, isoform 10 (253 aa).

The stretch at 8–222 (SMTFEERENR…MNEIQAAKNS (215 aa)) forms a coiled coil. Residues 233 to 253 (TATGTQPLQPAPVTQPPKEST) are disordered.

This is Rab GTPase-activating protein 1-like, isoform 10 (RABGAP1L) from Homo sapiens (Human).